The primary structure comprises 196 residues: dTTP/UTP pyrophosphatase (196 aa).

Aspartate 72 acts as the Proton acceptor in catalysis.

This sequence belongs to the Maf family. YhdE subfamily. A divalent metal cation is required as a cofactor.

The protein resides in the cytoplasm. It carries out the reaction dTTP + H2O = dTMP + diphosphate + H(+). It catalyses the reaction UTP + H2O = UMP + diphosphate + H(+). In terms of biological role, nucleoside triphosphate pyrophosphatase that hydrolyzes dTTP and UTP. May have a dual role in cell division arrest and in preventing the incorporation of modified nucleotides into cellular nucleic acids. In Chlamydia felis (strain Fe/C-56) (Chlamydophila felis), this protein is dTTP/UTP pyrophosphatase.